Reading from the N-terminus, the 154-residue chain is Ascorbate-specific PTS system EIIA component (154 aa).

Residues 6–150 form the PTS EIIA type-2 domain; that stretch reads SLAENKSIRL…QEVLDLIDRT (145 aa). Catalysis depends on His68, which acts as the Tele-phosphohistidine intermediate. His68 carries the phosphohistidine modification.

It localises to the cytoplasm. The phosphoenolpyruvate-dependent sugar phosphotransferase system (sugar PTS), a major carbohydrate active transport system, catalyzes the phosphorylation of incoming sugar substrates concomitantly with their translocation across the cell membrane. The enzyme II UlaABC PTS system is involved in ascorbate transport. In Shigella boydii serotype 4 (strain Sb227), this protein is Ascorbate-specific PTS system EIIA component (ulaC).